The chain runs to 268 residues: 4-hydroxy-tetrahydrodipicolinate reductase (268 aa).

Residue Gly9 to Met14 coordinates NAD(+). Arg36 is an NADP(+) binding site. NAD(+)-binding positions include Gly98 to Thr100 and Ala122 to Thr125. The Proton donor/acceptor role is filled by His155. Residue His156 participates in (S)-2,3,4,5-tetrahydrodipicolinate binding. Lys159 (proton donor) is an active-site residue. Gly165–Thr166 provides a ligand contact to (S)-2,3,4,5-tetrahydrodipicolinate.

The protein belongs to the DapB family.

The protein localises to the cytoplasm. The catalysed reaction is (S)-2,3,4,5-tetrahydrodipicolinate + NAD(+) + H2O = (2S,4S)-4-hydroxy-2,3,4,5-tetrahydrodipicolinate + NADH + H(+). It carries out the reaction (S)-2,3,4,5-tetrahydrodipicolinate + NADP(+) + H2O = (2S,4S)-4-hydroxy-2,3,4,5-tetrahydrodipicolinate + NADPH + H(+). It functions in the pathway amino-acid biosynthesis; L-lysine biosynthesis via DAP pathway; (S)-tetrahydrodipicolinate from L-aspartate: step 4/4. Catalyzes the conversion of 4-hydroxy-tetrahydrodipicolinate (HTPA) to tetrahydrodipicolinate. This is 4-hydroxy-tetrahydrodipicolinate reductase from Colwellia psychrerythraea (strain 34H / ATCC BAA-681) (Vibrio psychroerythus).